The sequence spans 352 residues: MVFRIASSPYTHNQRQTSRIMLLVLLAAVPGIAAQLWFFGWGTLVQILLASVSALLAEALVLKLRKQSVAATLKDNSALLTGLLLAVSIPPLAPWWMVVLGTVFAVIIAKQLYGGLGQNPFNPAMIGYVVLLISFPVQMTSWLPPHEIAVNIPGFIDAIQVIFSGHTASGGDMNTLRLGIDGISQATPLDTFKTSVRAGHSVEQIMQYPIYSGILAGAGWQWVNLAWLAGGVWLLWQKAIRWHIPLSFLVTLTLCATLGWLFSPETLAAPQIHLLSGATMLGAFFILTDPVTASTTNRGRLIFGALAGLLVWLIRSFGGYPDGVAFAVLLANITVPLIDYYTRPRVYGHRKG.

The next 5 helical transmembrane spans lie at 20-40 (IMLLVLLAAVPGIAAQLWFFG), 42-62 (GTLVQILLASVSALLAEALVL), 78-109 (ALLTGLLLAVSIPPLAPWWMVVLGTVFAVIIA), 123-143 (PAMIGYVVLLISFPVQMTSWL), and 148-168 (IAVNIPGFIDAIQVIFSGHTA). T187 bears the FMN phosphoryl threonine mark. 5 helical membrane passes run 214 to 234 (ILAGAGWQWVNLAWLAGGVWL), 242 to 262 (WHIPLSFLVTLTLCATLGWLF), 267 to 287 (LAAPQIHLLSGATMLGAFFIL), 301 to 321 (LIFGALAGLLVWLIRSFGGYP), and 322 to 342 (DGVAFAVLLANITVPLIDYYT).

Belongs to the NqrB/RnfD family. In terms of assembly, the complex is composed of six subunits: RsxA, RsxB, RsxC, RsxD, RsxE and RsxG. The cofactor is FMN.

Its subcellular location is the cell inner membrane. Its function is as follows. Part of a membrane-bound complex that couples electron transfer with translocation of ions across the membrane. Required to maintain the reduced state of SoxR. The polypeptide is Ion-translocating oxidoreductase complex subunit D (Escherichia coli O139:H28 (strain E24377A / ETEC)).